Reading from the N-terminus, the 304-residue chain is MHPEPAPPPSHSNPELPVSGGSSTSGSRRSRRRSGDGEPSGAPPLPPPPPAVSYPDWIGQSYSEVMSLNEHSMQALSWRKLYLSRAKLKASSRTSALLSGFAMVAMVEVQLDTDHDYPPGLLIVFSACTTVLVAVHLFALMISTCILPNIEAVSNVHNLNSVKESPHERMHRHIELAWAFSTVIGTLLFLAEVVLLCWVKFLPLKRQAGQPSPTKPPAESVIVANHSDSSGITPGEAAAIASTAIMVPCGLVFIVFAVHFYRSLVSHKTDRQFQELNELAEFARLQDQLDHRGDHSLTPGTHYA.

The segment covering methionine 1 to histidine 11 has biased composition (pro residues). Residues methionine 1–proline 50 form a disordered region. At methionine 1–lysine 89 the chain is on the cytoplasmic side. Residues proline 3–proline 49 form a required for generation of inwardly rectifying CRAC currents region. Residues serine 12–serine 27 are compositionally biased toward low complexity. The interval proline 39–serine 61 is AKAP5 association region. Over residues glycine 41–proline 50 the composition is skewed to pro residues. The segment at serine 72–serine 92 is interaction with STIM1. The helical transmembrane segment at alanine 90–valine 107 threads the bilayer. The Extracellular segment spans residues glutamate 108–leucine 121. The helical transmembrane segment at leucine 122–isoleucine 142 threads the bilayer. The Cytoplasmic segment spans residues serine 143–glutamate 175. A helical transmembrane segment spans residues leucine 176–leucine 196. The Extracellular segment spans residues cysteine 197–alanine 237. N-linked (GlcNAc...) asparagine glycosylation is present at asparagine 225. A helical transmembrane segment spans residues alanine 238–valine 258. The Cytoplasmic segment spans residues histidine 259–alanine 304. An interaction with STIM1 region spans residues glutamate 275 to histidine 295. Residue threonine 298 is modified to Phosphothreonine.

The protein belongs to the Orai family. Oligomerizes in homomeric and heteromeric ORAI complexes. Native CRAC channels most likely consist of hexameric ORAI heteromers, implying that diverse ORAI1, ORAI2 and ORAI3 subunit combinations with distinct biophysical properties can operate in a cell-type specific way. ARC channels are heteropentamers consisting of three ORAI1 and two ORAI3 subunits. Interacts with STIM1 and STIM2; this regulates channel activity. Interacts with CALM; this may displace STIM1 and STIM2 and might thereby modulate channel activity. Interacts (via N-terminus) with AKAP5 upon store depletion. Interacts with CRACR2A/EFCAB4B; the interaction is direct and takes place in absence of Ca(2+). Forms a complex with CRACR2A/EFCAB4B and STIM1 at low concentration of Ca(2+), the complex dissociates at elevated Ca(2+) concentrations. Interacts with ASPH (isoform 8). Interacts with SLC35G1. Interacts with UBQLN1. Interacts with ADCY8; interaction is calcium store depletion independent; interaction occurs in membrane raft; interaction increases markedly after store depletion; positively regulates SOCE-induced adenylate cyclase activity; contributes to the targeting of ADCY8 to discrete regions of the plasma membrane that are shielded from other calcium events. Interacts with EFHB; the interaction takes place upon Ca(2+)-store depletion. Interacts (via N- and C-termini) with ATP2C2 (via N-terminus); this interaction regulates Ca(2+) influx at the plasma membrane. Interacts with TSPAN18; this interaction regulates ORAI1 exit from the endoplasmic (ER), and/or Golgi, and trafficking to the cell surface. N-glycosylated. N-glycosylation inhibits channel activity in T cells. Post-translationally, ubiquitinated. In terms of processing, cys-195 is oxidated, leading to inactivation of channel activity. Expressed in lactating mammary epithelium (at protein level).

It is found in the cell membrane. It localises to the basolateral cell membrane. It catalyses the reaction Ca(2+)(in) = Ca(2+)(out). Its activity is regulated as follows. Oxidation at Cys-197 leads to inactivation of channel activity. Functionally, pore-forming subunit of two major inward rectifying Ca(2+) channels at the plasma membrane: Ca(2+) release-activated Ca(2+) (CRAC) channels and arachidonate-regulated Ca(2+)-selective (ARC) channels. Assembles with ORAI2 and ORAI3 to form hexameric CRAC channels that mediate Ca(2+) influx upon depletion of endoplasmic reticulum Ca(2+) store and channel activation by Ca(2+) sensor STIM1, a process known as store-operated Ca(2+) entry (SOCE). Various pore subunit combinations may account for distinct CRAC channel spatiotemporal and cell-type specific dynamics. ORAI1 mainly contributes to the generation of Ca(2+) plateaus involved in sustained Ca(2+) entry and is dispensable for cytosolic Ca(2+) oscillations, whereas ORAI2 and ORAI3 generate oscillatory patterns. CRAC channels assemble in Ca(2+) signaling microdomains where Ca(2+) influx is coupled to calmodulin and calcineurin signaling and activation of NFAT transcription factors recruited to ORAI1 via AKAP5. Activates NFATC2/NFAT1 and NFATC3/NFAT4-mediated transcriptional responses. CRAC channels are the main pathway for Ca(2+) influx in T cells and promote the immune response to pathogens by activating NFAT-dependent cytokine and chemokine transcription. Assembles with ORAI3 to form channels that mediate store-independent Ca(2+) influx in response to inflammatory metabolites arachidonate or its derivative leukotriene C4, termed ARC and LRC channels respectively. Plays a prominent role in Ca(2+) influx at the basolateral membrane of mammary epithelial cells independently of the Ca(2+) content of endoplasmic reticulum or Golgi stores. May mediate transepithelial transport of large quantities of Ca(2+) for milk secretion. The sequence is that of Calcium release-activated calcium channel protein 1 (Orai1) from Mus musculus (Mouse).